Here is a 399-residue protein sequence, read N- to C-terminus: Elongation factor Tu (399 aa).

One can recognise a tr-type G domain in the interval 10–204 (KPHVNIGTIG…AVDASIPEPE (195 aa)). The G1 stretch occupies residues 19-26 (GHVDHGKT). GTP is bound at residue 19–26 (GHVDHGKT). Threonine 26 provides a ligand contact to Mg(2+). The tract at residues 60–64 (GITIN) is G2. Residues 81-84 (DCPG) form a G3 region. Residues 81–85 (DCPGH) and 136–139 (NKCD) contribute to the GTP site. The segment at 136-139 (NKCD) is G4. The segment at 174–176 (SGL) is G5.

Belongs to the TRAFAC class translation factor GTPase superfamily. Classic translation factor GTPase family. EF-Tu/EF-1A subfamily. Monomer.

The protein localises to the cytoplasm. The enzyme catalyses GTP + H2O = GDP + phosphate + H(+). Functionally, GTP hydrolase that promotes the GTP-dependent binding of aminoacyl-tRNA to the A-site of ribosomes during protein biosynthesis. The sequence is that of Elongation factor Tu from Synechococcus sp. (strain CC9311).